The following is a 274-amino-acid chain: Thiamine kinase (274 aa).

The protein belongs to the thiamine kinase family.

It catalyses the reaction thiamine + ATP = thiamine phosphate + ADP + H(+). It participates in cofactor biosynthesis; thiamine diphosphate biosynthesis; thiamine phosphate from thiamine: step 1/1. In terms of biological role, catalyzes the ATP-dependent phosphorylation of thiamine to thiamine phosphate. Is involved in thiamine salvage. This Escherichia coli O45:K1 (strain S88 / ExPEC) protein is Thiamine kinase.